The primary structure comprises 283 residues: Formamidopyrimidine-DNA glycosylase (283 aa).

P2 (schiff-base intermediate with DNA) is an active-site residue. E3 acts as the Proton donor in catalysis. The active-site Proton donor; for beta-elimination activity is K58. Positions 100, 119, and 162 each coordinate DNA. The FPG-type zinc-finger motif lies at R247–R283. R273 functions as the Proton donor; for delta-elimination activity in the catalytic mechanism.

This sequence belongs to the FPG family. In terms of assembly, monomer. Zn(2+) serves as cofactor.

The enzyme catalyses Hydrolysis of DNA containing ring-opened 7-methylguanine residues, releasing 2,6-diamino-4-hydroxy-5-(N-methyl)formamidopyrimidine.. The catalysed reaction is 2'-deoxyribonucleotide-(2'-deoxyribose 5'-phosphate)-2'-deoxyribonucleotide-DNA = a 3'-end 2'-deoxyribonucleotide-(2,3-dehydro-2,3-deoxyribose 5'-phosphate)-DNA + a 5'-end 5'-phospho-2'-deoxyribonucleoside-DNA + H(+). In terms of biological role, involved in base excision repair of DNA damaged by oxidation or by mutagenic agents. Acts as a DNA glycosylase that recognizes and removes damaged bases. Has a preference for oxidized purines, such as 7,8-dihydro-8-oxoguanine (8-oxoG). Has AP (apurinic/apyrimidinic) lyase activity and introduces nicks in the DNA strand. Cleaves the DNA backbone by beta-delta elimination to generate a single-strand break at the site of the removed base with both 3'- and 5'-phosphates. The sequence is that of Formamidopyrimidine-DNA glycosylase from Cereibacter sphaeroides (strain KD131 / KCTC 12085) (Rhodobacter sphaeroides).